Here is a 577-residue protein sequence, read N- to C-terminus: MPSKAPRKSLSVSFVWTFSILAVLRLTSASFRVIDDCDEVYNYWEPLHYLLYGYGLQTWEYSPEYAIRSWFYIALHAVPGFLARGLGLSRLHVFYFIRGVLACFSAFCETNLILAVARNFNRAVALHLTSVLFVNSGMWSASTSFLPSSFAMNMVTLALSAQLSPPSTKRTVKVVSFITIGAVIGWPFSAALSIPFILLELVDLKGRFRHLFCRWFKAIFVALLITGICITVDSLFYHRIQFVAWNIVKYNVLAKDGRGPDIYGTEPWWYYFANLSLQHNIVLWFAMACGPLVLLAAFTNWINLDSFLDLSSVISPFYIWLFIFIIQPHKEERFMYPIYPVLCLAAAIGLDMSLKLMIQILSSINETVRSKFPVRFVVLCVYAIIGCLSIARILAIQNYNAPMIIYPAISFLETDNNVTTNVCVGKEWYRYPSTFFLPDNSRLKFVKSEFDGILPGEFVESNSTWWNREGYYQIPEHMNEFNNEEPTRYTSLESCDFLIDLEFDHSKATVNEPIYSKSDGWIPVMVYPFIDTKQTPFMGRAFAVPFIEPKWGRYEILVKKPVKIDFSNLRRASKQQA.

Positions 1-29 (MPSKAPRKSLSVSFVWTFSILAVLRLTSA) are cleaved as a signal peptide. The Extracellular portion of the chain corresponds to 30-68 (SFRVIDDCDEVYNYWEPLHYLLYGYGLQTWEYSPEYAIR). Residues 69 to 89 (SWFYIALHAVPGFLARGLGLS) traverse the membrane as a helical segment. Topologically, residues 90–95 (RLHVFY) are cytoplasmic. Residues 96-116 (FIRGVLACFSAFCETNLILAV) traverse the membrane as a helical segment. Residues 117-136 (ARNFNRAVALHLTSVLFVNS) lie on the Extracellular side of the membrane. Residues 137-159 (GMWSASTSFLPSSFAMNMVTLAL) form a helical membrane-spanning segment. Over 160 to 176 (SAQLSPPSTKRTVKVVS) the chain is Cytoplasmic. A helical transmembrane segment spans residues 177-197 (FITIGAVIGWPFSAALSIPFI). At 198-217 (LLELVDLKGRFRHLFCRWFK) the chain is on the extracellular side. The chain crosses the membrane as a helical span at residues 218 to 238 (AIFVALLITGICITVDSLFYH). At 239–280 (RIQFVAWNIVKYNVLAKDGRGPDIYGTEPWWYYFANLSLQHN) the chain is on the cytoplasmic side. The helical transmembrane segment at 281–301 (IVLWFAMACGPLVLLAAFTNW) threads the bilayer. Residues 302 to 305 (INLD) are Extracellular-facing. The helical transmembrane segment at 306 to 326 (SFLDLSSVISPFYIWLFIFII) threads the bilayer. Residues 327 to 333 (QPHKEER) lie on the Cytoplasmic side of the membrane. The helical transmembrane segment at 334 to 354 (FMYPIYPVLCLAAAIGLDMSL) threads the bilayer. Over 355-375 (KLMIQILSSINETVRSKFPVR) the chain is Extracellular. Residues 376–396 (FVVLCVYAIIGCLSIARILAI) traverse the membrane as a helical segment. Residues 397-577 (QNYNAPMIIY…NLRRASKQQA (181 aa)) lie on the Cytoplasmic side of the membrane.

This sequence belongs to the glycosyltransferase 22 family.

The protein resides in the endoplasmic reticulum membrane. The enzyme catalyses an alpha-D-Man-(1-&gt;2)-alpha-D-Man-(1-&gt;2)-alpha-D-Man-(1-&gt;3)-[alpha-D-Man-(1-&gt;3)-alpha-D-Man-(1-&gt;6)]-beta-D-Man-(1-&gt;4)-beta-D-GlcNAc-(1-&gt;4)-alpha-D-GlcNAc-diphospho-di-trans,poly-cis-dolichol + a di-trans,poly-cis-dolichyl beta-D-mannosyl phosphate = an alpha-D-Man-(1-&gt;2)-alpha-D-Man-(1-&gt;2)-alpha-D-Man-(1-&gt;3)-[alpha-D-Man-(1-&gt;2)-alpha-D-Man-(1-&gt;3)-alpha-D-Man-(1-&gt;6)]-beta-D-Man-(1-&gt;4)-beta-D-GlcNAc-(1-&gt;4)-alpha-D-GlcNAc-diphospho-di-trans,poly-cis-dolichol + a di-trans,poly-cis-dolichyl phosphate + H(+). The catalysed reaction is an alpha-D-Man-(1-&gt;2)-alpha-D-Man-(1-&gt;2)-alpha-D-Man-(1-&gt;3)-[alpha-D-Man-(1-&gt;2)-alpha-D-Man-(1-&gt;3)-[alpha-D-Man-(1-&gt;6)]-alpha-D-Man-(1-&gt;6)]-beta-D-Man-(1-&gt;4)-beta-D-GlcNAc-(1-&gt;4)-alpha-D-GlcNAc-diphospho-di-trans,poly-cis-dolichol + a di-trans,poly-cis-dolichyl beta-D-mannosyl phosphate = an alpha-D-Man-(1-&gt;2)-alpha-D-Man-(1-&gt;2)-alpha-D-Man-(1-&gt;3)-[alpha-D-Man-(1-&gt;2)-alpha-D-Man-(1-&gt;3)-[alpha-D-Man-(1-&gt;2)-alpha-D-Man-(1-&gt;6)]-alpha-D-Man-(1-&gt;6)]-beta-D-Man-(1-&gt;4)-beta-D-GlcNAc-(1-&gt;4)-alpha-D-GlcNAc-diphospho-di-trans,poly-cis-dolichol + a di-trans,poly-cis-dolichyl phosphate + H(+). Its pathway is protein modification; protein glycosylation. In terms of biological role, catalyzes the transfer of mannose from Dol-P-Man to lipid-linked oligosaccharides. In Schizosaccharomyces pombe (strain 972 / ATCC 24843) (Fission yeast), this protein is Alpha-1,2-mannosyltransferase alg9 (alg9).